A 289-amino-acid chain; its full sequence is Toxin tox21A (289 aa).

A signal peptide spans 1 to 14; it reads MNLYFLFFISTILA. Residues 15 to 27 constitute a propeptide that is removed on maturation; the sequence is AKPFNSFNKTSLI. Residues 270–289 form a disordered region; that stretch reads DKDITVHENAGDPKSDSRRC.

Post-translationally, contains several disulfide bonds. Posterior glands which appear to be connected with the stylet through a series of ducts.

The protein resides in the secreted. In terms of biological role, has contracting-paralyzing activity in insect larvae. The chain is Toxin tox21A from Pyemotes tritici (Straw itch mite).